We begin with the raw amino-acid sequence, 343 residues long: Thromboxane A2 receptor (343 aa).

Topologically, residues 1 to 29 are extracellular; it reads MWPNGSSLGPCFRPTNITLEERRLIASPW. N-linked (GlcNAc...) asparagine glycosylation is found at asparagine 4 and asparagine 16. A helical transmembrane segment spans residues 30–52; it reads FAASFCVVGLASNLLALSVLAGA. At 53-66 the chain is on the cytoplasmic side; it reads RQGGSHTRSSFLTF. A helical membrane pass occupies residues 67-87; the sequence is LCGLVLTDFLGLLVTGAIVVS. The Extracellular portion of the chain corresponds to 88–106; sequence QHAALFEWHAVDPGCRLCR. Cysteine 105 and cysteine 183 form a disulfide bridge. The chain crosses the membrane as a helical span at residues 107-128; the sequence is FMGVVMIFFGLSPLLLGATMAS. Topologically, residues 129–149 are cytoplasmic; the sequence is ERFLGITRPFSRPVVTSQRRA. Residues 150-172 form a helical membrane-spanning segment; sequence WATVGLVWAAALALGLLPLLGLG. Residues 173-193 are Extracellular-facing; sequence RYTVQYPGSWCFLTLGAESGD. The chain crosses the membrane as a helical span at residues 194–219; it reads VAFGLLFSMLGGLSVGLSFLLNTVSV. Topologically, residues 220–246 are cytoplasmic; it reads ATLCHVYHGQEAAQQRPRDSEVEMMAQ. A helical membrane pass occupies residues 247–270; it reads LLGIMLVASVCWLPLLVFIAQTVL. At 271–289 the chain is on the extracellular side; that stretch reads RNPPAMSPSGQLSRATEQE. Residues 290-311 form a helical membrane-spanning segment; sequence LLIYLRVATWNQILDPWVYILF. The Cytoplasmic portion of the chain corresponds to 312-343; that stretch reads RRAVLRRLQPRLSTRPRSLSLQPQLTQRSGLQ. A phosphoserine mark is found at serine 329 and serine 331.

The protein belongs to the G-protein coupled receptor 1 family. In terms of assembly, interacts with RPGRIP1L. Interacts with RACK1; the interaction regulates TBXA2R cell surface expression.

The protein resides in the cell membrane. Its function is as follows. Receptor for thromboxane A2 (TXA2), a potent stimulator of platelet aggregation. The activity of this receptor is mediated by a G-protein that activates a phosphatidylinositol-calcium second messenger system. In the kidney, the binding of TXA2 to glomerular TP receptors causes intense vasoconstriction. Activates phospholipase C and adenylyl cyclase. In Chlorocebus aethiops (Green monkey), this protein is Thromboxane A2 receptor (TBXA2R).